We begin with the raw amino-acid sequence, 224 residues long: MATHSHPHSHTVPARPRRVRKPGEPLRIGVGGPVGSGKTALVAALCRQLRGELSLAVLTNDIYTTEDADFLRTHAVLPDDRIAAVQTGGCPHTAIRDDITANLDAIDELMAAHDALDLILVESGGDNLTATFSSGLVDAQIFVIDVAGGDKVPRKGGPGVTYSDLLVVNKTDLAALVGADLAVMARDADAVRDGRPTVLQSLTEDPAASDVVAWVRSQLAADGV.

The segment covering 1 to 20 (MATHSHPHSHTVPARPRRVR) has biased composition (basic residues). Residues 1-25 (MATHSHPHSHTVPARPRRVRKPGEP) form a disordered region. 32-39 (GPVGSGKT) is a GTP binding site.

The protein belongs to the SIMIBI class G3E GTPase family. UreG subfamily. In terms of assembly, homodimer. UreD, UreF and UreG form a complex that acts as a GTP-hydrolysis-dependent molecular chaperone, activating the urease apoprotein by helping to assemble the nickel containing metallocenter of UreC. The UreE protein probably delivers the nickel.

It is found in the cytoplasm. In terms of biological role, facilitates the functional incorporation of the urease nickel metallocenter. This process requires GTP hydrolysis, probably effectuated by UreG. This is Urease accessory protein UreG from Mycobacterium bovis (strain ATCC BAA-935 / AF2122/97).